The following is a 98-amino-acid chain: Large ribosomal subunit protein uL23 (98 aa).

This sequence belongs to the universal ribosomal protein uL23 family. In terms of assembly, part of the 50S ribosomal subunit. Contacts protein L29, and trigger factor when it is bound to the ribosome.

One of the early assembly proteins it binds 23S rRNA. One of the proteins that surrounds the polypeptide exit tunnel on the outside of the ribosome. Forms the main docking site for trigger factor binding to the ribosome. This is Large ribosomal subunit protein uL23 from Rickettsia akari (strain Hartford).